A 223-amino-acid polypeptide reads, in one-letter code: Glutathione S-transferase Z2 (223 aa).

The GST N-terminal domain maps to 10–91; sequence AKLKLYSYWR…YLDDKYPEPP (82 aa). Residues 20-21, 20-25, glutamine 49, 49-50, 62-63, valine 63, 75-76, glutamine 115, and 119-121 contribute to the glutathione site; these read SS, SSCAHR, QS, TV, DS, and NMA. Residues 96-221 enclose the GST C-terminal domain; sequence DYHKRAVNYQ…VPEKQPDTPS (126 aa).

The protein belongs to the GST superfamily. Zeta family.

It localises to the cytoplasm. Its subcellular location is the cytosol. The enzyme catalyses RX + glutathione = an S-substituted glutathione + a halide anion + H(+). May be involved in the conjugation of reduced glutathione to a wide number of exogenous and endogenous hydrophobic electrophiles and have a detoxification role against certain herbicides. This chain is Glutathione S-transferase Z2 (GSTZ2), found in Arabidopsis thaliana (Mouse-ear cress).